A 234-amino-acid polypeptide reads, in one-letter code: UPF0173 metal-dependent hydrolase Atu1317 (234 aa).

Belongs to the UPF0173 family.

This Agrobacterium fabrum (strain C58 / ATCC 33970) (Agrobacterium tumefaciens (strain C58)) protein is UPF0173 metal-dependent hydrolase Atu1317.